The primary structure comprises 352 residues: Fatty acid synthase (352 aa).

Residues 1–352 form the Ketosynthase family 3 (KS3) domain; that stretch reads MEDVVIAGIA…KVVLSLEHGL (352 aa). Catalysis depends on for beta-ketoacyl synthase activity residues C161, H293, and H331.

As to quaternary structure, homodimer which monomers are arranged in a head to tail fashion.

The catalysed reaction is acetyl-CoA + n malonyl-CoA + 2n NADPH + 2n H(+) = a long-chain fatty acid + (n+1) CoA + n CO2 + 2n NADP(+).. Fatty acid synthetase catalyzes the formation of long-chain fatty acids from acetyl-CoA, malonyl-CoA and NADPH. This multifunctional protein has 7 catalytic activities as an acyl carrier protein. In Anser anser anser (Western greylag goose), this protein is Fatty acid synthase (FASN).